The sequence spans 212 residues: Large ribosomal subunit protein uL3 (212 aa).

It belongs to the universal ribosomal protein uL3 family. In terms of assembly, part of the 50S ribosomal subunit. Forms a cluster with proteins L14 and L19.

Its function is as follows. One of the primary rRNA binding proteins, it binds directly near the 3'-end of the 23S rRNA, where it nucleates assembly of the 50S subunit. The sequence is that of Large ribosomal subunit protein uL3 from Ruminiclostridium cellulolyticum (strain ATCC 35319 / DSM 5812 / JCM 6584 / H10) (Clostridium cellulolyticum).